Here is a 205-residue protein sequence, read N- to C-terminus: Small ribosomal subunit protein uS4 (205 aa).

Residues 94-154 (SRLDNSVYRA…TRKDGKIRKN (61 aa)) enclose the S4 RNA-binding domain.

It belongs to the universal ribosomal protein uS4 family. Part of the 30S ribosomal subunit. Contacts protein S5. The interaction surface between S4 and S5 is involved in control of translational fidelity.

In terms of biological role, one of the primary rRNA binding proteins, it binds directly to 16S rRNA where it nucleates assembly of the body of the 30S subunit. Functionally, with S5 and S12 plays an important role in translational accuracy. This Mesomycoplasma hyopneumoniae (strain 232) (Mycoplasma hyopneumoniae) protein is Small ribosomal subunit protein uS4.